The primary structure comprises 309 residues: Extracellular agarase (309 aa).

A signal peptide (tat-type signal) is located at residues 1-30 (MVNRRDLIKWSAVALGAGAGLAGPAPAAHA). A GH16 domain is found at 33–309 (LEWEQYPVPA…YRWVRTYQAV (277 aa)). Glu155 functions as the Nucleophile in the catalytic mechanism. Glu160 functions as the Proton donor in the catalytic mechanism.

It belongs to the glycosyl hydrolase 16 family. Predicted to be exported by the Tat system. The position of the signal peptide cleavage has been experimentally proven.

Its subcellular location is the secreted. It catalyses the reaction Hydrolysis of (1-&gt;4)-beta-D-galactosidic linkages in agarose, giving the tetramer as the predominant product.. The chain is Extracellular agarase (dagA) from Streptomyces coelicolor (strain ATCC BAA-471 / A3(2) / M145).